A 375-amino-acid chain; its full sequence is 2-methylcitrate synthase (375 aa).

2 residues coordinate substrate: K72 and H187. H222 is a catalytic residue. A CoA-binding site is contributed by K255–F259. H261 is an active-site residue. Substrate is bound at residue R270. D312 is a catalytic residue. Substrate contacts are provided by R337 and R356.

This sequence belongs to the citrate synthase family. As to quaternary structure, homodimer.

The enzyme catalyses propanoyl-CoA + oxaloacetate + H2O = (2S,3S)-2-methylcitrate + CoA + H(+). It catalyses the reaction oxaloacetate + acetyl-CoA + H2O = citrate + CoA + H(+). The protein operates within organic acid metabolism; propanoate degradation. Its pathway is carbohydrate metabolism; tricarboxylic acid cycle; isocitrate from oxaloacetate: step 1/2. Functionally, involved in the catabolism of short chain fatty acids (SCFA) via the tricarboxylic acid (TCA)(acetyl degradation route) and via the 2-methylcitrate cycle II (propionate degradation route). Catalyzes the Claisen condensation of propionyl-CoA and oxaloacetate (OAA) to yield 2-methylcitrate (2-MC) and CoA. Catalyzes the condensation of oxaloacetate with acetyl-CoA. The protein is 2-methylcitrate synthase (prpC) of Shewanella oneidensis (strain ATCC 700550 / JCM 31522 / CIP 106686 / LMG 19005 / NCIMB 14063 / MR-1).